The following is a 973-amino-acid chain: Ras-related protein Rab-44 (973 aa).

Positions 1-21 are enriched in basic residues; that stretch reads MEKGKGVSRKGRKLASSRRRQ. The disordered stretch occupies residues 1–42; sequence MEKGKGVSRKGRKLASSRRRQAREPADGQDAPVAAEAESWPS. An EF-hand domain is found at 77-111; the sequence is GGEEPQMIFDWVDVESRGHLSLEEFSSGLKNVFGS. Residues 112 to 140 form a disordered region; the sequence is SPGTHRLRTKRSLPSQRESVTSTLPVPEE. The segment covering 123-135 has biased composition (polar residues); it reads SLPSQRESVTSTL. A coiled-coil region spans residues 219 to 310; that stretch reads LYKVRQLYEE…ERDLAGQLEE (92 aa). 4 disordered regions span residues 319-368, 421-481, 493-708, and 724-779; these read RGHL…FGNN, FSQE…GSFL, GTVE…GLAV, and EAQP…GKPQ. Residues 428-440 show a composition bias toward pro residues; it reads DPDPGPRGSPEVP. A compositionally biased stretch (basic and acidic residues) spans 445–457; it reads KDGKGVEDPKGQD. Low complexity predominate over residues 513 to 524; sequence GLSSSPQSPAGS. Basic and acidic residues-rich tracts occupy residues 548–559, 598–608, and 654–663; these read SLEREVMAEDLK, HLARQESHAKG, and SESHGLEARS. The span at 665–680 shows a compositional bias: polar residues; that stretch reads ESPQQDDPLPNTSQPP. A compositionally biased stretch (basic and acidic residues) spans 750–766; it reads AESRPEDPRTDLQEAER. Residues 792–799, 840–844, and 898–901 each bind GTP; these read GDSNVGKT, DTAGQ, and NKMD. Residues Cys971 and Cys972 are each lipidated (S-geranylgeranyl cysteine).

It belongs to the small GTPase superfamily. Rab family.

It is found in the cell membrane. In Mus musculus (Mouse), this protein is Ras-related protein Rab-44 (Rab44).